The sequence spans 426 residues: Putative F-box/LRR-repeat protein At4g15060 (426 aa).

An F-box domain is found at M25 to H71. LRR repeat units follow at residues S50–Y75, E80–F106, I160–R187, V188–R213, T221–D259, E265–S290, C311–P337, C338–L363, and D373–W399.

This is Putative F-box/LRR-repeat protein At4g15060 from Arabidopsis thaliana (Mouse-ear cress).